The sequence spans 241 residues: Ion-translocating oxidoreductase complex subunit E (241 aa).

6 helical membrane-spanning segments follow: residues leucine 22 to glycine 42, isoleucine 69 to alanine 89, alanine 91 to valine 111, valine 124 to leucine 144, leucine 157 to leucine 177, and valine 182 to glycine 202.

The protein belongs to the NqrDE/RnfAE family. The complex is composed of six subunits: RnfA, RnfB, RnfC, RnfD, RnfE and RnfG.

It is found in the cell inner membrane. Part of a membrane-bound complex that couples electron transfer with translocation of ions across the membrane. This Buchnera aphidicola subsp. Baizongia pistaciae (strain Bp) protein is Ion-translocating oxidoreductase complex subunit E.